A 174-amino-acid polypeptide reads, in one-letter code: MSLAKSAANKLDWAKVISSLKLTGKTATQLSSFKKRNDEARRQLLELQSQPTSVDFSHYRSVLKNTEVVDKIEQFYKSYKPVSVDVSKQLSTIEAFESQAIENAAETEKLVAQELKDLKETLNNIESARPFDQLTVDELTKARPEIDAKVEEMVKKGRWDVPGYKEKFGDLTIM.

Serine 2 is subject to N-acetylserine.

The protein belongs to the ATPase d subunit family.

The protein localises to the mitochondrion inner membrane. Mitochondrial membrane ATP synthase (F(1)F(0) ATP synthase or Complex V) produces ATP from ADP in the presence of a proton gradient across the membrane which is generated by electron transport complexes of the respiratory chain. F-type ATPases consist of two structural domains, F(1) - containing the extramembraneous catalytic core, and F(0) - containing the membrane proton channel, linked together by a central stalk and a peripheral stalk. During catalysis, ATP synthesis in the catalytic domain of F(1) is coupled via a rotary mechanism of the central stalk subunits to proton translocation. Part of the complex F(0) domain and the peripheric stalk, which acts as a stator to hold the catalytic alpha(3)beta(3) subcomplex and subunit a/ATP6 static relative to the rotary elements. The polypeptide is ATP synthase subunit d, mitochondrial (ATP7) (Kluyveromyces lactis (strain ATCC 8585 / CBS 2359 / DSM 70799 / NBRC 1267 / NRRL Y-1140 / WM37) (Yeast)).